A 64-amino-acid polypeptide reads, in one-letter code: Large ribosomal subunit protein uL29 (64 aa).

It belongs to the universal ribosomal protein uL29 family.

The protein is Large ribosomal subunit protein uL29 of Maridesulfovibrio salexigens (strain ATCC 14822 / DSM 2638 / NCIMB 8403 / VKM B-1763) (Desulfovibrio salexigens).